Reading from the N-terminus, the 248-residue chain is DNA-directed RNA polymerase subunit Rpo3 (248 aa).

This sequence belongs to the archaeal Rpo3/eukaryotic RPB3 RNA polymerase subunit family. Part of the RNA polymerase complex.

Its subcellular location is the cytoplasm. It catalyses the reaction RNA(n) + a ribonucleoside 5'-triphosphate = RNA(n+1) + diphosphate. DNA-dependent RNA polymerase (RNAP) catalyzes the transcription of DNA into RNA using the four ribonucleoside triphosphates as substrates. The protein is DNA-directed RNA polymerase subunit Rpo3 of Halobacterium salinarum (strain ATCC 29341 / DSM 671 / R1).